A 120-amino-acid polypeptide reads, in one-letter code: NAD(P)H-quinone oxidoreductase subunit 3, chloroplastic (120 aa).

A run of 3 helical transmembrane segments spans residues 9 to 29 (IFWAFLIISSLIPILAFFISG), 64 to 84 (MFALVFVVFDVETVFLYPWAM), and 88 to 108 (VLGVSVFIEALIFVLILIVGL).

This sequence belongs to the complex I subunit 3 family. NDH is composed of at least 16 different subunits, 5 of which are encoded in the nucleus.

Its subcellular location is the plastid. The protein localises to the chloroplast thylakoid membrane. It catalyses the reaction a plastoquinone + NADH + (n+1) H(+)(in) = a plastoquinol + NAD(+) + n H(+)(out). It carries out the reaction a plastoquinone + NADPH + (n+1) H(+)(in) = a plastoquinol + NADP(+) + n H(+)(out). Its function is as follows. NDH shuttles electrons from NAD(P)H:plastoquinone, via FMN and iron-sulfur (Fe-S) centers, to quinones in the photosynthetic chain and possibly in a chloroplast respiratory chain. The immediate electron acceptor for the enzyme in this species is believed to be plastoquinone. Couples the redox reaction to proton translocation, and thus conserves the redox energy in a proton gradient. The chain is NAD(P)H-quinone oxidoreductase subunit 3, chloroplastic from Panax ginseng (Korean ginseng).